A 390-amino-acid chain; its full sequence is Glutamyl-tRNA reductase (390 aa).

Substrate is bound by residues 46–49, S96, 101–103, and Q107; these read TCNR and EAQ. C47 functions as the Nucleophile in the catalytic mechanism. 176–181 provides a ligand contact to NADP(+); sequence GAGEMA.

Belongs to the glutamyl-tRNA reductase family. As to quaternary structure, homodimer.

The catalysed reaction is (S)-4-amino-5-oxopentanoate + tRNA(Glu) + NADP(+) = L-glutamyl-tRNA(Glu) + NADPH + H(+). It participates in porphyrin-containing compound metabolism; protoporphyrin-IX biosynthesis; 5-aminolevulinate from L-glutamyl-tRNA(Glu): step 1/2. Catalyzes the NADPH-dependent reduction of glutamyl-tRNA(Glu) to glutamate 1-semialdehyde (GSA). This is Glutamyl-tRNA reductase from Thermus thermophilus (strain ATCC BAA-163 / DSM 7039 / HB27).